The sequence spans 324 residues: Probable pectinesterase A (324 aa).

A signal peptide spans Met-1–Thr-19. Asn-27 carries an N-linked (GlcNAc...) asparagine glycan. A substrate-binding site is contributed by Gln-142. Asp-165 serves as the catalytic Proton donor. Residue Asp-186 is the Nucleophile of the active site. Residues Arg-246 and Trp-248 each coordinate substrate.

Belongs to the pectinesterase family.

It is found in the secreted. The catalysed reaction is [(1-&gt;4)-alpha-D-galacturonosyl methyl ester](n) + n H2O = [(1-&gt;4)-alpha-D-galacturonosyl](n) + n methanol + n H(+). It participates in glycan metabolism; pectin degradation; 2-dehydro-3-deoxy-D-gluconate from pectin: step 1/5. Its function is as follows. Involved in maceration and soft-rotting of plant tissue. This is Probable pectinesterase A (pmeA) from Aspergillus fumigatus (strain CBS 144.89 / FGSC A1163 / CEA10) (Neosartorya fumigata).